Reading from the N-terminus, the 195-residue chain is Granulocyte colony-stimulating factor (195 aa).

An N-terminal signal peptide occupies residues 1 to 21 (MKLMVLQLLLWHSALWTVHEA). Intrachain disulfides connect Cys57-Cys63 and Cys85-Cys95. Thr154 is a glycosylation site (O-linked (GalNAc...) threonine).

It belongs to the IL-6 superfamily. In terms of assembly, monomer. O-glycosylated.

The protein localises to the secreted. Granulocyte/macrophage colony-stimulating factors are cytokines that act in hematopoiesis by controlling the production, differentiation, and function of 2 related white cell populations of the blood, the granulocytes and the monocytes-macrophages. This CSF induces granulocytes. The chain is Granulocyte colony-stimulating factor (CSF3) from Bos taurus (Bovine).